The following is a 326-amino-acid chain: Protein LEG1 homolog (326 aa).

Residues 1-22 (MKSNKTIFLILLFLINFNSIYS) form the signal peptide. N-linked (GlcNAc...) asparagine glycosylation is found at Asn58, Asn85, Asn165, Asn226, and Asn245.

It belongs to the LEG1 family.

Its subcellular location is the secreted. The polypeptide is Protein LEG1 homolog (Dictyostelium discoideum (Social amoeba)).